Here is an 82-residue protein sequence, read N- to C-terminus: RNA-binding protein Hfq (82 aa).

The Sm domain occupies 10–70 (DLFLNTVRKS…ISTIMPSQPV (61 aa)).

Belongs to the Hfq family. In terms of assembly, homohexamer.

In terms of biological role, RNA chaperone that binds small regulatory RNA (sRNAs) and mRNAs to facilitate mRNA translational regulation in response to envelope stress, environmental stress and changes in metabolite concentrations. Also binds with high specificity to tRNAs. This Chelativorans sp. (strain BNC1) protein is RNA-binding protein Hfq.